Here is a 480-residue protein sequence, read N- to C-terminus: ATP synthase subunit beta (480 aa).

154-161 contacts ATP; it reads GGAGVGKT.

The protein belongs to the ATPase alpha/beta chains family. F-type ATPases have 2 components, CF(1) - the catalytic core - and CF(0) - the membrane proton channel. CF(1) has five subunits: alpha(3), beta(3), gamma(1), delta(1), epsilon(1). CF(0) has four main subunits: a(1), b(1), b'(1) and c(9-12).

Its subcellular location is the cell inner membrane. The catalysed reaction is ATP + H2O + 4 H(+)(in) = ADP + phosphate + 5 H(+)(out). Functionally, produces ATP from ADP in the presence of a proton gradient across the membrane. The catalytic sites are hosted primarily by the beta subunits. This chain is ATP synthase subunit beta, found in Bradyrhizobium sp. (strain ORS 278).